The sequence spans 380 residues: SAM and SH3 domain-containing protein 3 (380 aa).

2 disordered regions span residues 1–76 (MLRR…GKKW) and 96–168 (LSEE…SPAP). Positions 22–41 (LQRSSSFKDFAKSKPSSPVV) are enriched in low complexity. A phosphoserine mark is found at serine 27, serine 34, and serine 42. Threonine 61 carries the phosphothreonine modification. At serine 97 the chain carries Phosphoserine. At threonine 103 the chain carries Phosphothreonine. Phosphoserine is present on serine 110. Phosphothreonine is present on threonine 112. 2 positions are modified to phosphoserine: serine 113 and serine 120. Polar residues predominate over residues 141-150 (LSRQTSTGSE). Positions 173–234 (PFCGRARVHT…KFIYVDVLPE (62 aa)) constitute an SH3 domain. Residues 252–316 (PKPKTLHELL…LTAAELLLDY (65 aa)) enclose the SAM domain. Threonine 318 carries the phosphothreonine modification. Acidic residues predominate over residues 318–327 (TGSEEAEEGA). Residues 318–380 (TGSEEAEEGA…LQGLSLSGAP (63 aa)) are disordered. The residue at position 320 (serine 320) is a Phosphoserine. Residues 369–380 (EQLQGLSLSGAP) are compositionally biased toward polar residues.

In terms of tissue distribution, preferentially expressed in lymphoid tissues. Expressed in bone marrow, thymus, spleen, lymph nodes and Peyer patches of gut. In the spleen and lymph nodes, expressed in both T- and B-cells. In the thymus, in the medulla and cortex.

May function as a signaling adapter protein in lymphocytes. The protein is SAM and SH3 domain-containing protein 3 (Sash3) of Mus musculus (Mouse).